Here is a 357-residue protein sequence, read N- to C-terminus: Peptide chain release factor 1 (357 aa).

The residue at position 232 (Gln-232) is an N5-methylglutamine. Over residues 281–305 the composition is skewed to basic and acidic residues; that stretch reads DRQHNEMAADRRSQVGSGDRSERIR. Positions 281 to 309 are disordered; the sequence is DRQHNEMAADRRSQVGSGDRSERIRTYNF.

It belongs to the prokaryotic/mitochondrial release factor family. Post-translationally, methylated by PrmC. Methylation increases the termination efficiency of RF1.

It is found in the cytoplasm. In terms of biological role, peptide chain release factor 1 directs the termination of translation in response to the peptide chain termination codons UAG and UAA. This Nitratidesulfovibrio vulgaris (strain DSM 19637 / Miyazaki F) (Desulfovibrio vulgaris) protein is Peptide chain release factor 1.